The following is a 210-amino-acid chain: Small ribosomal subunit protein uS4 (210 aa).

Residues Glu-30–Gly-49 form a disordered region. The region spanning Arg-99–Ile-162 is the S4 RNA-binding domain.

Belongs to the universal ribosomal protein uS4 family. Part of the 30S ribosomal subunit. Contacts protein S5. The interaction surface between S4 and S5 is involved in control of translational fidelity.

In terms of biological role, one of the primary rRNA binding proteins, it binds directly to 16S rRNA where it nucleates assembly of the body of the 30S subunit. Functionally, with S5 and S12 plays an important role in translational accuracy. This chain is Small ribosomal subunit protein uS4, found in Leptospira biflexa serovar Patoc (strain Patoc 1 / Ames).